The sequence spans 242 residues: Methylthioribulose-1-phosphate dehydratase (242 aa).

Serine 87 carries the post-translational modification Phosphoserine. Cysteine 97 is a binding site for substrate. 2 residues coordinate Zn(2+): histidine 115 and histidine 117. Glutamate 139 functions as the Proton donor/acceptor in the catalytic mechanism. Histidine 195 provides a ligand contact to Zn(2+).

The protein belongs to the aldolase class II family. MtnB subfamily. In terms of assembly, homotetramer. Interacts with APAF1. May interact with CASP1. It depends on Zn(2+) as a cofactor. Isoform 1 is ubiquitously expressed. Isoform 2 is expressed at lower levels and detected in heart, brain, pancreas, liver, placenta, skeletal muscle and kidney.

It localises to the cytoplasm. It catalyses the reaction 5-(methylsulfanyl)-D-ribulose 1-phosphate = 5-methylsulfanyl-2,3-dioxopentyl phosphate + H2O. Its pathway is amino-acid biosynthesis; L-methionine biosynthesis via salvage pathway; L-methionine from S-methyl-5-thio-alpha-D-ribose 1-phosphate: step 2/6. In terms of biological role, catalyzes the dehydration of methylthioribulose-1-phosphate (MTRu-1-P) into 2,3-diketo-5-methylthiopentyl-1-phosphate (DK-MTP-1-P). Functions in the methionine salvage pathway, which plays a key role in cancer, apoptosis, microbial proliferation and inflammation. May inhibit the CASP1-related inflammatory response (pyroptosis), the CASP9-dependent apoptotic pathway and the cytochrome c-dependent and APAF1-mediated cell death. The protein is Methylthioribulose-1-phosphate dehydratase of Homo sapiens (Human).